The sequence spans 189 residues: MKEQQKETEQNIEEINDETVTEQIETDVDTLEKEAEVDPQQVEIEQLQSDVKELEDKLLRAQAEIQNIQQRHARELQTVRKYDGQKLAGAVLPAVDNLERALQVESEDAVTQQIKTGVEMTLGTLVQALRDNGISATGEVGETFDPTKHQAIQSVASDDVASDQIATVLQKGYMIQDRVLRPAMVAVAK.

Positions 1-22 (MKEQQKETEQNIEEINDETVTE) are disordered. Acidic residues predominate over residues 10–22 (QNIEEINDETVTE).

It belongs to the GrpE family. As to quaternary structure, homodimer.

Its subcellular location is the cytoplasm. Its function is as follows. Participates actively in the response to hyperosmotic and heat shock by preventing the aggregation of stress-denatured proteins, in association with DnaK and GrpE. It is the nucleotide exchange factor for DnaK and may function as a thermosensor. Unfolded proteins bind initially to DnaJ; upon interaction with the DnaJ-bound protein, DnaK hydrolyzes its bound ATP, resulting in the formation of a stable complex. GrpE releases ADP from DnaK; ATP binding to DnaK triggers the release of the substrate protein, thus completing the reaction cycle. Several rounds of ATP-dependent interactions between DnaJ, DnaK and GrpE are required for fully efficient folding. The polypeptide is Protein GrpE (Leuconostoc citreum (strain KM20)).